A 27-amino-acid chain; its full sequence is Nemertide alpha-8 (27 aa).

3 disulfides stabilise this stretch: C2–C16, C9–C20, and C15–C26.

It belongs to the nemertide family. Confined to the epidermis and to the mucus layer.

Its subcellular location is the secreted. In terms of biological role, highly potent toxin against both insect and some mammalian sodium channels (Nav). It potently inhibits inactivation of insect sodium channels of B.germanica (BgNav1) and also delays the inactivation of mammalian Nav with potent activity on Nav1.3/SCN3A and Nav1.4/SCN4A. 1 uM is enough to completely inhibits the inactivation, resulting in sustained non-inactivating currents. In addition, the toxin significantly enhances the recovery from inactivation, and the open state is not required for the toxin to interact with the channel. In vivo, injection into brine shrimp (Artemia salina) stops movement or causes death after 24 hours (EC(50)=0.4 uM). The chain is Nemertide alpha-8 from Riseriellus occultus (Ribbon worm).